A 332-amino-acid polypeptide reads, in one-letter code: Lipoyl synthase (332 aa).

[4Fe-4S] cluster is bound by residues C74, C79, C85, C100, C104, C107, and S314. The 219-residue stretch at 85–303 folds into the Radical SAM core domain; that stretch reads CFGKGTATFM…EEEAYKMGFT (219 aa).

This sequence belongs to the radical SAM superfamily. Lipoyl synthase family. Requires [4Fe-4S] cluster as cofactor.

It localises to the cytoplasm. The enzyme catalyses [[Fe-S] cluster scaffold protein carrying a second [4Fe-4S](2+) cluster] + N(6)-octanoyl-L-lysyl-[protein] + 2 oxidized [2Fe-2S]-[ferredoxin] + 2 S-adenosyl-L-methionine + 4 H(+) = [[Fe-S] cluster scaffold protein] + N(6)-[(R)-dihydrolipoyl]-L-lysyl-[protein] + 4 Fe(3+) + 2 hydrogen sulfide + 2 5'-deoxyadenosine + 2 L-methionine + 2 reduced [2Fe-2S]-[ferredoxin]. It participates in protein modification; protein lipoylation via endogenous pathway; protein N(6)-(lipoyl)lysine from octanoyl-[acyl-carrier-protein]: step 2/2. Its function is as follows. Catalyzes the radical-mediated insertion of two sulfur atoms into the C-6 and C-8 positions of the octanoyl moiety bound to the lipoyl domains of lipoate-dependent enzymes, thereby converting the octanoylated domains into lipoylated derivatives. The sequence is that of Lipoyl synthase from Paracidovorax citrulli (strain AAC00-1) (Acidovorax citrulli).